The primary structure comprises 94 residues: Protein RnfH (94 aa).

Belongs to the UPF0125 (RnfH) family.

This chain is Protein RnfH, found in Yersinia pestis bv. Antiqua (strain Antiqua).